A 364-amino-acid chain; its full sequence is Peptide chain release factor 1 (364 aa).

Residue Gln237 is modified to N5-methylglutamine.

It belongs to the prokaryotic/mitochondrial release factor family. Post-translationally, methylated by PrmC. Methylation increases the termination efficiency of RF1.

It is found in the cytoplasm. Functionally, peptide chain release factor 1 directs the termination of translation in response to the peptide chain termination codons UAG and UAA. The chain is Peptide chain release factor 1 from Rubrobacter xylanophilus (strain DSM 9941 / JCM 11954 / NBRC 16129 / PRD-1).